The following is a 459-amino-acid chain: Glycosyl hydrolase family 109 protein (459 aa).

The segment at residues 1-31 (MHNIHRRNFLKAAGAATAGLVTANIALNAYA) is a signal peptide (tat-type signal). Residues 64–65 (ER), aspartate 86, 135–138 (WEWH), 155–156 (EV), and asparagine 184 contribute to the NAD(+) site. Substrate is bound by residues tyrosine 213, arginine 232, 244–247 (YPTH), and tyrosine 326. Residue tyrosine 244 coordinates NAD(+).

Belongs to the Gfo/Idh/MocA family. Glycosyl hydrolase 109 subfamily. Requires NAD(+) as cofactor. Post-translationally, predicted to be exported by the Tat system. The position of the signal peptide cleavage has not been experimentally proven.

Functionally, glycosidase. In Shewanella baltica (strain OS155 / ATCC BAA-1091), this protein is Glycosyl hydrolase family 109 protein.